The sequence spans 671 residues: Probable potassium transport system protein Kup 2 (671 aa).

12 consecutive transmembrane segments (helical) span residues 18–38 (GFLIALGIVYGDIGTSPLYAM), 60–80 (VSLVIWTLTLITTVKYVLIAL), 103–123 (WLIVPAMIGGATLLADGALTP), 149–169 (VTTLIILAFLFLIQRFGASLV), 173–193 (FGPIMFIWFGFLGVSGLINSF), 218–238 (AGFFILGSIFLVTTGAEALYS), 252–272 (WPFVKICIILSYCGQGAWLLA), 292–312 (MVIYVVILSTLAAIIASQALI), 343–363 (LYIPAVNFALWVTTSFFVLYF), 373–393 (YSLAITITMLMTTTLLTYFLI), 402–422 (IAFISIGLFCIEGSFFAASLV), and 424–444 (FINGAYIVVLIALAIIFVMFI).

Belongs to the HAK/KUP transporter (TC 2.A.72) family.

It localises to the cell membrane. The catalysed reaction is K(+)(in) + H(+)(in) = K(+)(out) + H(+)(out). Functionally, transport of potassium into the cell. Likely operates as a K(+):H(+) symporter. This Lactococcus lactis subsp. cremoris (strain SK11) protein is Probable potassium transport system protein Kup 2.